The sequence spans 207 residues: LexA repressor (207 aa).

Residues 28–48 constitute a DNA-binding region (H-T-H motif); sequence RAEIARELGFRSANAAEEHLK. Active-site for autocatalytic cleavage activity residues include Ser124 and Lys161.

This sequence belongs to the peptidase S24 family. In terms of assembly, homodimer.

The enzyme catalyses Hydrolysis of Ala-|-Gly bond in repressor LexA.. Its function is as follows. Represses a number of genes involved in the response to DNA damage (SOS response), including recA and lexA. In the presence of single-stranded DNA, RecA interacts with LexA causing an autocatalytic cleavage which disrupts the DNA-binding part of LexA, leading to derepression of the SOS regulon and eventually DNA repair. This chain is LexA repressor, found in Aliivibrio salmonicida (strain LFI1238) (Vibrio salmonicida (strain LFI1238)).